A 189-amino-acid polypeptide reads, in one-letter code: Large ribosomal subunit protein eL20 (189 aa).

It belongs to the eukaryotic ribosomal protein eL20 family.

Its subcellular location is the cytoplasm. The protein is Large ribosomal subunit protein eL20 (RPL18A) of Tetrahymena thermophila.